The chain runs to 117 residues: Flagellar transcriptional regulator FlhD (117 aa).

It belongs to the FlhD family. As to quaternary structure, homodimer; disulfide-linked. Forms a heterohexamer composed of two FlhC and four FlhD subunits. Each FlhC binds a FlhD dimer, forming a heterotrimer, and a hexamer assembles by dimerization of two heterotrimers.

It localises to the cytoplasm. Functionally, functions in complex with FlhC as a master transcriptional regulator that regulates transcription of several flagellar and non-flagellar operons by binding to their promoter region. Activates expression of class 2 flagellar genes, including fliA, which is a flagellum-specific sigma factor that turns on the class 3 genes. Also regulates genes whose products function in a variety of physiological pathways. This chain is Flagellar transcriptional regulator FlhD, found in Photorhabdus laumondii subsp. laumondii (strain DSM 15139 / CIP 105565 / TT01) (Photorhabdus luminescens subsp. laumondii).